The sequence spans 382 residues: Neuropeptide Y receptor type 1 (382 aa).

The Extracellular portion of the chain corresponds to 1–33 (MNSTLFSKVENHSIHYNASENSPLLAFENDDCH). Asparagine 2, asparagine 11, and asparagine 17 each carry an N-linked (GlcNAc...) asparagine glycan. A helical transmembrane segment spans residues 34-54 (LPLAVIFTLALAYGAVIILGV). Over 55-75 (SGNLALIIIILKQKEMRNVTN) the chain is Cytoplasmic. Residues 76 to 96 (ILIVNLSFSDLLVAVMCLPFT) form a helical membrane-spanning segment. Over 97 to 115 (FVYTLMDHWVFGETMCKLN) the chain is Extracellular. Cysteine 112 and cysteine 197 are joined by a disulfide. A helical membrane pass occupies residues 116-136 (PFVQCVSITVSIFSLVLIAVE). Topologically, residues 137-153 (RHQLIINPRGWRPNNRH) are cytoplasmic. Residues 154-174 (AYIGITVIWVLAVASSLPFVI) form a helical membrane-spanning segment. Topologically, residues 175–210 (YQILTDEPFQNVSLAAFKDKYVCFDKFPSDSHRLSY) are extracellular. The helical transmembrane segment at 211–231 (TTLLLVLQYFGPLCFIFICYF) threads the bilayer. Residues 232–259 (KIYIRLKRRNNMMDKIRDSKYRSSETKR) are Cytoplasmic-facing. The helical transmembrane segment at 260 to 280 (INIMLLSIVVAFAVCWLPLTI) threads the bilayer. Residues 281 to 298 (FNTVFDWNHQIIATCNHN) lie on the Extracellular side of the membrane. A helical membrane pass occupies residues 299–319 (LLFLLCHLTAMISTCVNPIFY). Residues 320–382 (GFLNKNFQRD…KISMNDNEKV (63 aa)) are Cytoplasmic-facing. Cysteine 337 is lipidated: S-palmitoyl cysteine. Phosphoserine occurs at positions 367 and 375.

It belongs to the G-protein coupled receptor 1 family. As to expression, the alpha form is highly expressed in the brain, heart, kidney, spleen, skeletal muscle, and lung, whereas the beta receptor mRNA was not detected in these tissues. However, the beta form is expressed in mouse embryonic developmental stage (7 and 11 days), bone marrow cells and several hematopoietic cell lines.

The protein localises to the cell membrane. In terms of biological role, receptor for neuropeptide Y and peptide YY. The sequence is that of Neuropeptide Y receptor type 1 (Npy1r) from Mus musculus (Mouse).